We begin with the raw amino-acid sequence, 284 residues long: MKNNFSKYQGLGNDFIIFDARSNNLDHLFSKNKDNFIEHLCNRNFGIGADGIILILESNNKCFVRMKIYNSDGSEPEMCGNGIRCLIAFLNDNNEINELSEIPIETKAGLILTYIDGNENIKVNMGEPILSPLDIPTKLLMNSLKVPNGVITLKDQILNVYAASMGNPHMIVFVNDIEGIPFQEWGSFLEKHNTFPNDTNVHFVEIIDKSNIKVKVWERGCGPTLACGTGACACLVVTSKLGKTLNNANVYLPGGKLEVEWPNQSGPVFMQGPALKVFSGEIDI.

2 residues coordinate substrate: asparagine 13 and asparagine 70. Cysteine 79 serves as the catalytic Proton donor. Substrate contacts are provided by residues 80 to 81 (GN), asparagine 167, asparagine 200, and 218 to 219 (ER). Catalysis depends on cysteine 227, which acts as the Proton acceptor. 228–229 (GT) is a binding site for substrate.

This sequence belongs to the diaminopimelate epimerase family. As to quaternary structure, homodimer.

It localises to the cytoplasm. The enzyme catalyses (2S,6S)-2,6-diaminopimelate = meso-2,6-diaminopimelate. The protein operates within amino-acid biosynthesis; L-lysine biosynthesis via DAP pathway; DL-2,6-diaminopimelate from LL-2,6-diaminopimelate: step 1/1. Its function is as follows. Catalyzes the stereoinversion of LL-2,6-diaminopimelate (L,L-DAP) to meso-diaminopimelate (meso-DAP), a precursor of L-lysine and an essential component of the bacterial peptidoglycan. In Prochlorococcus marinus (strain NATL2A), this protein is Diaminopimelate epimerase.